We begin with the raw amino-acid sequence, 592 residues long: AT-rich interactive domain-containing protein 5A (592 aa).

The tract at residues 1 to 53 (MAPPVKGKRKQSEEGEPLDPPVSPQPDGEPRSRSPVRLEEPPEAGREREEEQE) is disordered. The interaction with SOX9 stretch occupies residues 1-299 (MAPPVKGKRK…AAPPLESPQS (299 aa)). The residue at position 23 (S23) is a Phosphoserine. The segment covering 28 to 49 (GEPRSRSPVRLEEPPEAGRERE) has biased composition (basic and acidic residues). The 93-residue stretch at 52-144 (QEEEQAFLVS…LVLPYVRHLK (93 aa)) folds into the ARID domain. Glycyl lysine isopeptide (Lys-Gly) (interchain with G-Cter in ubiquitin) cross-links involve residues K82 and K91. Positions 143–225 (LKGEDDKPLP…RGPAAGPSLP (83 aa)) are disordered. The span at 162–186 (MAKEPRGDDGATERPKKVKEEKRVD) shows a compositional bias: basic and acidic residues. At S253 the chain carries Phosphoserine. The interval 277–333 (CRHGAGGEPQAPPAAPPLESPQSPGGPAEDSRHRLTPLEGRQAPGGGLWGETQAGPR) is disordered. The span at 286 to 295 (QAPPAAPPLE) shows a compositional bias: pro residues. Phosphoserine is present on residues S438 and S463.

Interacts with SOX9. Interacts with ESR1. Interacts with RORC. In terms of processing, phosphorylated by MAPK14 on serine residues involving a TLR4 signaling pathway upon lipopolysaccharide (LPS) stimulation leading to its ubiquitination and proteasomal degradation. Ubiquitinated leading to proteasomal degradation; involving WWP1 linked to MAPK14-mediated phosphorylation upon LPS stimulation.

The protein localises to the nucleus. Functionally, DNA-binding protein that may regulate transcription and act as a repressor by binding to AT-rich stretches in the promoter region of target genes. May act as repressor and down-regulate enhancer-dependent gene expressison. May positively regulate chondrocyte-specific transcription such as of COL2A1 in collaboration with SOX9 and positively regulate histone H3 acetylation at chondrocyte-specific genes. May stimulate early-stage chondrocyte differentiation and inhibit later stage differention. Can repress ESR1-mediated transcriptional activation; proposed to act as corepressor for selective nuclear hormone receptors. As an RNA-binding protein, involved in the regulation of inflammatory response by stabilizing selective inflammation-related mRNAs, such as STAT3 and TBX21. Also stabilizes IL6 mRNA. Binds to stem loop structures located in the 3'UTRs of IL6, STAT3 and TBX21 mRNAs; at least for STAT3 prevents binding of ZC3H12A to the mRNA stem loop structure thus inhibiting its degradation activity. Contributes to elevated IL6 levels possibly implicated in autoimmunity processes. IL6-dependent stabilization of STAT3 mRNA may promote differentiation of naive CD4+ T-cells into T-helper Th17 cells. In CD4+ T-cells may also inhibit RORC-induced Th17 cell differentiation independently of IL6 signaling. Stabilization of TBX21 mRNA contributes to elevated interferon-gamma secretion in Th1 cells possibly implicated in the establishment of septic shock. Stabilizes TNFRSF4/OX40 mRNA by binding to the conserved stem loop structure in its 3'UTR; thereby competing with the mRNA-destabilizing functions of RC3H1 and endoribonuclease ZC3H12A. The protein is AT-rich interactive domain-containing protein 5A (ARID5A) of Bos taurus (Bovine).